The primary structure comprises 312 residues: Zinc finger protein 414 (312 aa).

Residues Met-1 to Pro-110 are disordered. Low complexity predominate over residues Ser-29–Glu-48. Over residues Gly-84–Ser-93 the composition is skewed to polar residues. 3 C2H2-type zinc fingers span residues Ile-109–His-133, Phe-145–His-169, and Phe-176–His-201. The interval Gln-203–Arg-312 is disordered. Positions Leu-213 to Glu-225 are enriched in basic and acidic residues. 2 stretches are compositionally biased toward low complexity: residues Asp-227–Thr-243 and Ser-265–Ala-285.

This sequence belongs to the krueppel C2H2-type zinc-finger protein family.

It is found in the nucleus. In terms of biological role, may be involved in transcriptional regulation. The sequence is that of Zinc finger protein 414 (ZNF414) from Homo sapiens (Human).